The chain runs to 202 residues: Small ribosomal subunit protein uS4 (202 aa).

The interval 23 to 42 (RKNARRAYAPGQHGQARKKR) is disordered. In terms of domain architecture, S4 RNA-binding spans 90–153 (MRLDNTVFRL…RSQDLVKRNM (64 aa)).

The protein belongs to the universal ribosomal protein uS4 family. Part of the 30S ribosomal subunit. Contacts protein S5. The interaction surface between S4 and S5 is involved in control of translational fidelity.

In terms of biological role, one of the primary rRNA binding proteins, it binds directly to 16S rRNA where it nucleates assembly of the body of the 30S subunit. Functionally, with S5 and S12 plays an important role in translational accuracy. The chain is Small ribosomal subunit protein uS4 from Microcystis aeruginosa (strain NIES-843 / IAM M-2473).